Consider the following 807-residue polypeptide: MAATELRGVVGPGPAAIAALGGGGAGPPVVGGGGGRGDAGPGSGAASGTVVAAAAGGPGPGAGGVAAAGPAPAPPTGGSGGSGAGGSGSAREGWLFKWTNYIKGYQRRWFVLSNGLLSYYRSKAEMRHTCRGTINLATANITVEDSCNFIISNGGAQTYHLKASSEVERQRWVTALELAKAKAVKMLAESDESGDEESVSQTDKTELQNTLRTLSSKVEDLSTCNDLIAKHGTALQRSLSELESLKLPAESNEKIKQVNERATLFRITSNAMINACRDFLMLAQTHSKKWQKSLQYERDQRIRLEETLEQLAKQHNHLERAFRGATVLPANTPGNVGSGKDQCCSGKGDMSDEDDENEFFDAPEIITMPENLGHKRTGSNISGASSDISLDEQYKHQLEETKKEKRTRIPYKPNYSLNLWSIMKNCIGKELSKIPMPVNFNEPLSMLQRLTEDLEYHELLDRAAKCENSLEQLCYVAAFTVSSYSTTVFRTSKPFNPLLGETFELDRLEENGYRSLCEQVSHHPPAAAHHAESKNGWTLRQEIKITSKFRGKYLSIMPLGTIHCIFHATGHHYTWKKVTTTVHNIIVGKLWIDQSGEIDIVNHKTGDKCNLKFVPYSYFSRDVARKVTGEVTDPSGKVHFALLGTWDEKMECFKVQPVIGENGGDARQRGHEAEESRVMLWKRNPLPKNAENMYYFSELALTLNAWESGTAPTDSRLRPDQRLMENGRWDEANAEKQRLEEKQRLSRKKREAEAMKATEDGTPYDPYKALWFERKKDPVTKELTHIYRGEYWECKEKQDWSSCPDIF.

Position 2 is an N-acetylalanine (Ala-2). Residues 61–86 (GAGGVAAAGPAPAPPTGGSGGSGAGG) are disordered. Residues 77 to 86 (GGSGGSGAGG) show a composition bias toward gly residues. A PH domain is found at 88-181 (GSAREGWLFK…WVTALELAKA (94 aa)). 117–122 (LSYYRS) serves as a coordination point for a 1,2-diacyl-sn-glycero-3-phospho-(1D-myo-inositol 4-phosphate). Phosphoserine is present on residues Ser-190, Ser-193, Ser-198, Ser-238, and Ser-240. Positions 291–326 (QKSLQYERDQRIRLEETLEQLAKQHNHLERAFRGAT) form a coiled coil. Gln-314 provides a ligand contact to 20-hydroxycholesterol. Gln-314 lines the 25-hydroxycholesterol pocket. Position 314 (Gln-314) interacts with 7beta-hydroxycholesterol. Residue Gln-314 participates in cholesterol binding. Gln-314 is a binding site for ergosterol. Residues 329–353 (PANTPGNVGSGKDQCCSGKGDMSDE) are disordered. 3 positions are modified to phosphoserine: Ser-338, Ser-345, and Ser-351. The FFAT signature appears at 358–364 (EFFDAPE). Thr-377 carries the phosphothreonine modification. Ser-379, Ser-382, Ser-385, Ser-386, and Ser-389 each carry phosphoserine. Residues 493–496 (KPFN) and 522–523 (HH) contribute to the a 1,2-diacyl-sn-glycero-3-phospho-(1D-myo-inositol 4-phosphate) site. A disordered region spans residues 710–759 (TAPTDSRLRPDQRLMENGRWDEANAEKQRLEEKQRLSRKKREAEAMKATE). Positions 715–759 (SRLRPDQRLMENGRWDEANAEKQRLEEKQRLSRKKREAEAMKATE) are enriched in basic and acidic residues. Residues 730 to 760 (DEANAEKQRLEEKQRLSRKKREAEAMKATED) adopt a coiled-coil conformation.

The protein belongs to the OSBP family. In terms of assembly, homodimer or homotrimer. Interacts (via FFAT motif) with VAPA. Interacts (via C-terminus) with RELCH (via the third HEAT repeat). Found in a complex composed of RELCH, OSBP1 and RAB11A. As to expression, widely expressed.

The protein resides in the cytoplasm. It is found in the cytosol. It localises to the perinuclear region. The protein localises to the golgi apparatus membrane. Its subcellular location is the endoplasmic reticulum membrane. The protein resides in the golgi apparatus. It is found in the trans-Golgi network. Lipid transporter involved in lipid countertransport between the Golgi complex and membranes of the endoplasmic reticulum: specifically exchanges sterol with phosphatidylinositol 4-phosphate (PI4P), delivering sterol to the Golgi in exchange for PI4P, which is degraded by the SAC1/SACM1L phosphatase in the endoplasmic reticulum. Binds cholesterol and a range of oxysterols including 25-hydroxycholesterol. Cholesterol binding promotes the formation of a complex with PP2A and a tyrosine phosphatase which dephosphorylates ERK1/2, whereas 25-hydroxycholesterol causes its disassembly. Regulates cholesterol efflux by decreasing ABCA1 stability. This Homo sapiens (Human) protein is Oxysterol-binding protein 1.